Consider the following 86-residue polypeptide: Large ribosomal subunit protein bL27c (86 aa).

The tract at residues 1–27 (MAHKKGSGSTRNGRDSNSKRLGVKKYG) is disordered.

This sequence belongs to the bacterial ribosomal protein bL27 family.

It is found in the plastid. The protein localises to the chloroplast. This Porphyra purpurea (Red seaweed) protein is Large ribosomal subunit protein bL27c (rpl27).